Reading from the N-terminus, the 191-residue chain is Protein GrpE (191 aa).

Basic and acidic residues-rich tracts occupy residues 1-19 and 29-42; these read MKDE…EPES and QQGE…EKEC. A disordered region spans residues 1–42; sequence MKDEHNQEHDHLSQKEPESYQKACACKEQQGEEKQEASEKEC.

This sequence belongs to the GrpE family. Homodimer.

Its subcellular location is the cytoplasm. Functionally, participates actively in the response to hyperosmotic and heat shock by preventing the aggregation of stress-denatured proteins, in association with DnaK and GrpE. It is the nucleotide exchange factor for DnaK and may function as a thermosensor. Unfolded proteins bind initially to DnaJ; upon interaction with the DnaJ-bound protein, DnaK hydrolyzes its bound ATP, resulting in the formation of a stable complex. GrpE releases ADP from DnaK; ATP binding to DnaK triggers the release of the substrate protein, thus completing the reaction cycle. Several rounds of ATP-dependent interactions between DnaJ, DnaK and GrpE are required for fully efficient folding. This is Protein GrpE from Helicobacter pylori (strain HPAG1).